We begin with the raw amino-acid sequence, 87 residues long: MNSLLMITACLVLIGTVWAKKDGYLVDKTGCKKTCYKLGENDFCNRECKWKHIGGSYGYCYGFGCYCEGMSDSTPTWPLPNKRCGKK.

The first 19 residues, 1–19 (MNSLLMITACLVLIGTVWA), serve as a signal peptide directing secretion. Residues 20-85 (KKDGYLVDKT…TWPLPNKRCG (66 aa)) enclose the LCN-type CS-alpha/beta domain. 4 cysteine pairs are disulfide-bonded: cysteine 31–cysteine 84, cysteine 35–cysteine 60, cysteine 44–cysteine 65, and cysteine 48–cysteine 67. The residue at position 84 (cysteine 84) is a Cysteine amide.

This sequence belongs to the long (4 C-C) scorpion toxin superfamily. Sodium channel inhibitor family. Beta subfamily. As to expression, expressed by the venom gland.

It is found in the secreted. Its function is as follows. Beta toxins bind voltage-independently at site-4 of sodium channels (Nav) and shift the voltage of activation toward more negative potentials thereby affecting sodium channel activation and promoting spontaneous and repetitive firing. Is possibly lethal to mice, freshwater shrimp and crickets. The chain is Beta-toxin Ct17 from Centruroides tecomanus (Scorpion).